A 427-amino-acid chain; its full sequence is Trigger factor (427 aa).

A PPIase FKBP-type domain is found at 163-248 (GDTVVIDFVG…VNEVKAKEVP (86 aa)).

It belongs to the FKBP-type PPIase family. Tig subfamily.

The protein localises to the cytoplasm. The catalysed reaction is [protein]-peptidylproline (omega=180) = [protein]-peptidylproline (omega=0). Its function is as follows. Involved in protein export. Acts as a chaperone by maintaining the newly synthesized protein in an open conformation. Functions as a peptidyl-prolyl cis-trans isomerase. The protein is Trigger factor of Streptococcus thermophilus (strain CNRZ 1066).